Reading from the N-terminus, the 131-residue chain is UPF0102 protein H16_A3579 (131 aa).

Belongs to the UPF0102 family.

The sequence is that of UPF0102 protein H16_A3579 from Cupriavidus necator (strain ATCC 17699 / DSM 428 / KCTC 22496 / NCIMB 10442 / H16 / Stanier 337) (Ralstonia eutropha).